A 554-amino-acid polypeptide reads, in one-letter code: Arginine--tRNA ligase (554 aa).

The 'HIGH' region signature appears at 132–142; that stretch reads ANPTGPIHLGG.

Belongs to the class-I aminoacyl-tRNA synthetase family. Monomer.

It is found in the cytoplasm. The catalysed reaction is tRNA(Arg) + L-arginine + ATP = L-arginyl-tRNA(Arg) + AMP + diphosphate. The chain is Arginine--tRNA ligase from Clavibacter sepedonicus (Clavibacter michiganensis subsp. sepedonicus).